We begin with the raw amino-acid sequence, 329 residues long: DNA-directed RNA polymerase subunit alpha (329 aa).

The interval 1 to 235 (MQGSVTEFLK…EQLEAFVDLR (235 aa)) is alpha N-terminal domain (alpha-NTD). The segment at 249 to 329 (FDPILLRPVD…NWPPASIADE (81 aa)) is alpha C-terminal domain (alpha-CTD).

This sequence belongs to the RNA polymerase alpha chain family. As to quaternary structure, homodimer. The RNAP catalytic core consists of 2 alpha, 1 beta, 1 beta' and 1 omega subunit. When a sigma factor is associated with the core the holoenzyme is formed, which can initiate transcription.

It carries out the reaction RNA(n) + a ribonucleoside 5'-triphosphate = RNA(n+1) + diphosphate. DNA-dependent RNA polymerase catalyzes the transcription of DNA into RNA using the four ribonucleoside triphosphates as substrates. This chain is DNA-directed RNA polymerase subunit alpha, found in Shigella dysenteriae serotype 1 (strain Sd197).